A 1072-amino-acid polypeptide reads, in one-letter code: Guanylyl cyclase C (1072 aa).

An N-terminal signal peptide occupies residues 1-19; it reads MTSLLGLAVRLLLFQPALM. Residues 20-433 are Extracellular-facing; it reads VFWASQVRQN…VPGLGPQILM (414 aa). Asn-32, Asn-75, Asn-79, Asn-179, Asn-188, Asn-195, Asn-284, Asn-307, Asn-345, and Asn-402 each carry an N-linked (GlcNAc...) asparagine glycan. The chain crosses the membrane as a helical span at residues 434–454; the sequence is IAVFTLTGILVVLLLIALLVL. The Cytoplasmic portion of the chain corresponds to 455–1072; it reads RKYRRDHALR…NNSDHDSTYF (618 aa). A Protein kinase domain is found at 489 to 748; sequence LKIDDDRRRD…KIESTLAKIF (260 aa). The 131-residue stretch at 823–953 folds into the Guanylate cyclase domain; that stretch reads TIYFSDIVGF…DTVNTASRME (131 aa).

Belongs to the adenylyl cyclase class-4/guanylyl cyclase family. In terms of assembly, homotrimer. Interacts via its C-terminal region with NHERF4. Interacts with the lectin chaperone VIP36. In terms of processing, glycosylation at Asn-75 and/or Asn-79 is required for interaction with VIP36 while glycosylation at Asn-345 and Asn-402 modulates ligand-mediated GC-C activation.

The protein localises to the cell membrane. It localises to the endoplasmic reticulum membrane. The catalysed reaction is GTP = 3',5'-cyclic GMP + diphosphate. In terms of biological role, guanylyl cyclase that catalyzes synthesis of cyclic GMP (cGMP) from GTP. The protein is Guanylyl cyclase C (Gucy2c) of Mus musculus (Mouse).